The primary structure comprises 435 residues: Trigger factor (435 aa).

Residues 162–247 enclose the PPIase FKBP-type domain; it reads GDRVIIDFKG…VKNVAEATLP (86 aa).

This sequence belongs to the FKBP-type PPIase family. Tig subfamily.

Its subcellular location is the cytoplasm. The catalysed reaction is [protein]-peptidylproline (omega=180) = [protein]-peptidylproline (omega=0). Functionally, involved in protein export. Acts as a chaperone by maintaining the newly synthesized protein in an open conformation. Functions as a peptidyl-prolyl cis-trans isomerase. The chain is Trigger factor from Chromobacterium violaceum (strain ATCC 12472 / DSM 30191 / JCM 1249 / CCUG 213 / NBRC 12614 / NCIMB 9131 / NCTC 9757 / MK).